We begin with the raw amino-acid sequence, 102 residues long: Complement inhibitor RaCI3 (102 aa).

The N-terminal stretch at 1–24 (MAALNGLVLLLLTISAMFISECYS) is a signal peptide. Cystine bridges form between Cys37–Cys61, Cys42–Cys63, and Cys57–Cys78.

The protein belongs to the RaCI family. Expressed in salivary glands.

The protein resides in the secreted. In terms of biological role, complement inhibitor. Prevents complement-mediated C5 activation by binding to C5. Binds C5 at a different binding site than the other tick complement inhibitors OmCI and CirpT1, and the drug eculizumab. Inhibits complement in human and guinea pig but not in other species tested (rabbit, rat, mouse, and pig). The sequence is that of Complement inhibitor RaCI3 from Dermacentor andersoni (Rocky mountain wood tick).